The sequence spans 467 residues: ADAM DEC1 (467 aa).

The signal sequence occupies residues 1–33 (MLPGTSRLPTEASMSWVLLSVLWLIIQIQVIDA). The propeptide occupies 34–208 (TLTPELKPHE…LRTSRSLKNP (175 aa)). N-linked (GlcNAc...) asparagine glycans are attached at residues Asn-61 and Asn-236. The 195-residue stretch at 217–411 (KYIGLFLVLD…RNARCLLLAP (195 aa)) folds into the Peptidase M12B domain. Cystine bridges form between Cys-327/Cys-406 and Cys-368/Cys-373. His-351 provides a ligand contact to Zn(2+). The active site involves Glu-352. Zn(2+) is bound by residues His-355 and Asp-361. A Disintegrin domain is found at 418–467 (KPTCGNQVLDVGEECDCGSPEECTNLCCEPLTCRLKSQPDCSEASNHITE).

Zn(2+) is required as a cofactor. In terms of tissue distribution, expressed highly in uterus during pregnancy.

Its subcellular location is the secreted. Functionally, may play an important role in the control of the immune response and during pregnancy. This is ADAM DEC1 (Adamdec1) from Mus musculus (Mouse).